A 398-amino-acid chain; its full sequence is Protochlorophyllide reductase, chloroplastic (398 aa).

The N-terminal 64 residues, 1–64 (MALQAASLVS…NQQIGAIRAQ (64 aa)), are a transit peptide targeting the chloroplast.

This sequence belongs to the short-chain dehydrogenases/reductases (SDR) family. POR subfamily.

The protein localises to the plastid. It is found in the chloroplast. It catalyses the reaction chlorophyllide a + NADP(+) = protochlorophyllide a + NADPH + H(+). Its pathway is porphyrin-containing compound metabolism; chlorophyll biosynthesis. Functionally, phototransformation of protochlorophyllide (Pchlide) to chlorophyllide (Chlide). In Cucumis sativus (Cucumber), this protein is Protochlorophyllide reductase, chloroplastic (PORA).